The primary structure comprises 2616 residues: Serine protease ndl (2616 aa).

The N-terminal stretch at 1–43 is a signal peptide; the sequence is MNYNMDEMEATRLLRHPRRWWSIGFGKRIVAISILVIIVLLFS. A phosphoserine mark is found at Ser-215 and Ser-220. One copy of the WIID 1 repeat lies at 261–269; the sequence is ISWIIDGHD. N-linked (GlcNAc...) asparagine glycosylation occurs at Asn-291. A WIID 2 repeat occupies 320-328; the sequence is ISWILDHFD. Residue Asn-347 is glycosylated (N-linked (GlcNAc...) asparagine). The segment at 352-375 is disordered; the sequence is SASSEPIVDTENTNSDHVPTTENG. N-linked (GlcNAc...) asparagine glycosylation is present at Asn-379. The WIID 3 repeat unit spans residues 399–407; the sequence is FDWILDGEE. N-linked (GlcNAc...) asparagine glycosylation is present at Asn-417. WIID repeat units follow at residues 446–454 and 477–485; these read FDWIIDGRE and FDWIIDGEE. Asn-492 and Asn-515 each carry an N-linked (GlcNAc...) asparagine glycan. Residues 528–536 form a WIID 6 repeat; it reads FDWIIDGGE. Low complexity predominate over residues 537-547; it reads SSGEVSTSSTS. The segment at 537 to 574 is disordered; that stretch reads SSGEVSTSSTSQPKLTTREAISNPESPRSSHPLDNPTS. Over residues 548–565 the composition is skewed to polar residues; sequence QPKLTTREAISNPESPRS. Residues Ser-574 and Ser-581 each carry the phosphoserine modification. Asn-598 is a glycosylation site (N-linked (GlcNAc...) asparagine). O-linked (Xyl...) (glycosaminoglycan) serine glycosylation occurs at Ser-794. A disordered region spans residues 798 to 817; the sequence is GQGANIFSKNASPQKPTNGQ. The span at 804–817 shows a compositional bias: polar residues; the sequence is FSKNASPQKPTNGQ. N-linked (GlcNAc...) asparagine glycosylation occurs at Asn-827. An O-linked (Xyl...) (glycosaminoglycan) serine glycan is attached at Ser-829. Residue Asn-861 is glycosylated (N-linked (GlcNAc...) asparagine). LDL-receptor class A domains are found at residues 889–929 and 955–1006; these read SRCP…ACTC and FGCE…QCSM. 3 disulfides stabilise this stretch: Cys-891/Cys-905, Cys-899/Cys-918, and Cys-912/Cys-927. In terms of domain architecture, LDL-receptor class A 2; truncated spans 929-956; sequence CADRVDEERLCDGYEDCPMGEDELGCFG. 3 disulfides stabilise this stretch: Cys-957–Cys-982, Cys-964–Cys-995, and Cys-989–Cys-1004. A glycan (N-linked (GlcNAc...) asparagine) is linked at Asn-975. Positions 1031-1033 match the Cell attachment site motif; it reads RGD. Asn-1064 carries an N-linked (GlcNAc...) asparagine glycan. Phosphoserine occurs at positions 1134 and 1136. Positions 1145–1383 constitute a Peptidase S1 1 domain; sequence IVGGSYTSAL…YLDWLEMATT (239 aa). Cys-1170 and Cys-1186 form a disulfide bridge. Active-site charge relay system residues include His-1185 and Asp-1233. 6 disulfide bridges follow: Cys-1276–Cys-1338, Cys-1305–Cys-1317, Cys-1328–Cys-1359, Cys-1396–Cys-1408, Cys-1401–Cys-1421, and Cys-1415–Cys-1430. Ser-1332 functions as the Charge relay system in the catalytic mechanism. The LDL-receptor class A 4 domain maps to 1394 to 1432; it reads QLCPGFICVWGGKRCIAKRQRCDRNVDCLGGEDEVGCTY. A glycan (N-linked (GlcNAc...) asparagine) is linked at Asn-1445. 2 disordered regions span residues 1530–1557 and 1683–1704; these read FTVS…PSTN and PTTT…HSEK. Low complexity-rich tracts occupy residues 1537–1557 and 1683–1700; these read TSPS…PSTN and PTTT…SSST. The LDL-receptor class A 5; truncated domain maps to 1713–1743; the sequence is FVCKKMSQIVDIMMRCDRKVDCEDGTDELDC. 6 disulfides stabilise this stretch: Cys-1728/Cys-1745, Cys-1734/Cys-1764, Cys-1758/Cys-1773, Cys-1776/Cys-1789, Cys-1783/Cys-1802, and Cys-1796/Cys-1811. The 31-residue stretch at 1745–1775 folds into the LDL-receptor class A 6; truncated domain; the sequence is CKDYLKGSLKGLICDGKADCEDLTDEQNCVE. The region spanning 1774-1813 is the LDL-receptor class A 7 domain; that stretch reads VECQSNEFRCPLSKTCLPLSSRCDNKVDCKFKEDEKDCFA. 3 N-linked (GlcNAc...) asparagine glycosylation sites follow: Asn-1878, Asn-1956, and Asn-2023. Residues 2027–2301 enclose the Peptidase S1 2 domain; that stretch reads LVNEQLHEAI…LQDIIDKPSC (275 aa). Residues Cys-2055 and Cys-2071 are joined by a disulfide bond. N-linked (GlcNAc...) asparagine glycans are attached at residues Asn-2144, Asn-2173, Asn-2197, Asn-2237, and Asn-2269. An intrachain disulfide couples Cys-2177 to Cys-2230. 3 consecutive LDL-receptor class A domains span residues 2308 to 2346, 2349 to 2389, and 2419 to 2459; these read PDCS…KCRQ, QQCA…ICSC, and CNCT…YCFG. 6 cysteine pairs are disulfide-bonded: Cys-2310–Cys-2320, Cys-2315–Cys-2333, Cys-2327–Cys-2344, Cys-2351–Cys-2364, Cys-2358–Cys-2377, and Cys-2371–Cys-2387. Residues 2387 to 2419 form the LDL-receptor class A 10; truncated domain; that stretch reads CSCFTYLQATDPSKICDGKRNCWDKSDESSVLC. N-linked (GlcNAc...) asparagine glycosylation is present at Asn-2420. 3 cysteine pairs are disulfide-bonded: Cys-2421–Cys-2435, Cys-2428–Cys-2448, and Cys-2442–Cys-2457. Residues Asn-2556 and Asn-2601 are each glycosylated (N-linked (GlcNAc...) asparagine).

Belongs to the peptidase S1 family. In terms of processing, requires cleavage for activation (presumably). Follicle.

It localises to the secreted. The protein resides in the extracellular space. The protein localises to the extracellular matrix. Component of the extracellular signaling pathway that establishes the dorsal-ventral pathway of the embryo. A protease cascade involving ndl, gd, snk and ea results in activation of the spz Toll receptor ligand; acts upstream of gd, snk and ea and is required for proteolytic processing of gd. Activation of ea requires activation of the ndl-gd-snk protease cascade and sulfation of a vitelline membrane component by pip. Localized activation of the Toll receptor in the ventral region of the embryo defines cell identities along the dorsal-ventral continuum. The protein is Serine protease ndl of Drosophila melanogaster (Fruit fly).